Consider the following 705-residue polypeptide: Fatty acid oxidation complex subunit alpha (705 aa).

Positions 1–188 are enoyl-CoA hydratase; the sequence is MGKTFNLTRR…KMGLVNDVVP (188 aa). The 3-hydroxyacyl-CoA dehydrogenase stretch occupies residues 308–705; that stretch reads RKVKKAVILG…AMAAEKARFF (398 aa).

In the N-terminal section; belongs to the enoyl-CoA hydratase/isomerase family. The protein in the central section; belongs to the 3-hydroxyacyl-CoA dehydrogenase family. In terms of assembly, heterotetramer of two alpha chains (FadJ) and two beta chains (FadI).

The protein localises to the cytoplasm. It catalyses the reaction a (3S)-3-hydroxyacyl-CoA = a (2E)-enoyl-CoA + H2O. The catalysed reaction is a 4-saturated-(3S)-3-hydroxyacyl-CoA = a (3E)-enoyl-CoA + H2O. The enzyme catalyses a (3S)-3-hydroxyacyl-CoA + NAD(+) = a 3-oxoacyl-CoA + NADH + H(+). It carries out the reaction (3S)-3-hydroxybutanoyl-CoA = (3R)-3-hydroxybutanoyl-CoA. The protein operates within lipid metabolism; fatty acid beta-oxidation. In terms of biological role, catalyzes the formation of a hydroxyacyl-CoA by addition of water on enoyl-CoA. Also exhibits 3-hydroxyacyl-CoA epimerase and 3-hydroxyacyl-CoA dehydrogenase activities. This chain is Fatty acid oxidation complex subunit alpha, found in Shewanella oneidensis (strain ATCC 700550 / JCM 31522 / CIP 106686 / LMG 19005 / NCIMB 14063 / MR-1).